The sequence spans 336 residues: Phosphate acyltransferase (336 aa).

The protein belongs to the PlsX family. Homodimer. Probably interacts with PlsY.

The protein localises to the cytoplasm. It carries out the reaction a fatty acyl-[ACP] + phosphate = an acyl phosphate + holo-[ACP]. Its pathway is lipid metabolism; phospholipid metabolism. In terms of biological role, catalyzes the reversible formation of acyl-phosphate (acyl-PO(4)) from acyl-[acyl-carrier-protein] (acyl-ACP). This enzyme utilizes acyl-ACP as fatty acyl donor, but not acyl-CoA. In Dictyoglomus turgidum (strain DSM 6724 / Z-1310), this protein is Phosphate acyltransferase.